The primary structure comprises 754 residues: Gelsolin, cytoplasmic (754 aa).

The actin-severing stretch occupies residues 1–120 (MVPAFEGAGA…RYLKGGVASG (120 aa)). The Gelsolin-like 1 repeat unit spans residues 22 to 71 (FEVVPYPKEKYGQFYQGDSYIVLYTRDVNGNLSWDLHFWLGSETSQDEAG). An actin-actin interfilament contact point region spans residues 68–71 (DEAG). Residues 101–108 (LFLSRFKK) and 133–141 (RLFHVKGRR) contribute to the a 1,2-diacyl-sn-glycero-3-phospho-(1D-myo-inositol-4,5-bisphosphate) site. The stretch at 143 to 183 (IRIRQVEVGVGSMNKGDCFILDCGSQVYAYMGPSSRKMDRL) is one Gelsolin-like 2 repeat. Residues 209-238 (TASGSEAGESSPGLGGGSPDDVADEDTGVD) form a disordered region. The span at 210–220 (ASGSEAGESSP) shows a compositional bias: low complexity. Gelsolin-like repeat units follow at residues 266–306 (NMIG…KEKV), 414–463 (LKLE…DEKA), 538–580 (FDTR…EEKA), and 643–684 (LRVN…QEKE). The tract at residues 386–751 (LLQKNAGPAF…MKAQVPETNA (366 aa)) is actin-binding, Ca-sensitive. Positions 430, 431, 461, 556, 578, 659, 660, and 682 each coordinate Ca(2+).

It belongs to the villin/gelsolin family. As to expression, tail muscle.

It is found in the cytoplasm. The protein resides in the cytoskeleton. Its function is as follows. Calcium-regulated, actin-modulating protein that binds to the plus (or barbed) ends of actin monomers or filaments, preventing monomer exchange (end-blocking or capping). It can promote the assembly of monomers into filaments (nucleation) as well as sever filaments already formed. The protein is Gelsolin, cytoplasmic of Homarus americanus (American lobster).